The following is a 93-amino-acid chain: Small ribosomal subunit protein uS17 (93 aa).

This sequence belongs to the universal ribosomal protein uS17 family. As to quaternary structure, part of the 30S ribosomal subunit.

One of the primary rRNA binding proteins, it binds specifically to the 5'-end of 16S ribosomal RNA. This is Small ribosomal subunit protein uS17 from Bordetella bronchiseptica (strain ATCC BAA-588 / NCTC 13252 / RB50) (Alcaligenes bronchisepticus).